A 415-amino-acid chain; its full sequence is Phosphoribosylamine--glycine ligase (415 aa).

Positions 108 to 311 (KKIMKKYNIP…LMQHIIDLDE (204 aa)) constitute an ATP-grasp domain. 134-191 (IENCELPVVVKKDGLAAGKGVIIADTIEAARSAIEIMYGDEEEGTVVFETFLEGEEFS) is an ATP binding site. Glu281 and Asn283 together coordinate Mg(2+).

The protein belongs to the GARS family. Requires Mg(2+) as cofactor. It depends on Mn(2+) as a cofactor.

The catalysed reaction is 5-phospho-beta-D-ribosylamine + glycine + ATP = N(1)-(5-phospho-beta-D-ribosyl)glycinamide + ADP + phosphate + H(+). Its pathway is purine metabolism; IMP biosynthesis via de novo pathway; N(1)-(5-phospho-D-ribosyl)glycinamide from 5-phospho-alpha-D-ribose 1-diphosphate: step 2/2. This Staphylococcus aureus (strain Mu50 / ATCC 700699) protein is Phosphoribosylamine--glycine ligase.